The chain runs to 1441 residues: uncharacterized protein (1441 aa).

Disordered regions lie at residues 1–95 (MGFL…EVIS), 150–204 (NGGI…QQQF), 224–289 (KPHQ…GEGE), 401–477 (HSNG…QLHQ), 529–661 (RHES…QPQQ), 680–760 (LNKD…KSQT), 776–810 (RKSS…HIQQ), 849–899 (QQQF…TQQL), 980–1118 (RGGS…DNNN), 1161–1185 (KSLK…NENN), 1209–1321 (NIES…YRSY), 1348–1402 (GHNS…HIFF), and 1421–1441 (LKFN…SILE). The span at 19-38 (NDNSFDGGSSSYNNNNNNNN) shows a compositional bias: low complexity. Residues 39-56 (QPITYTPTAIRSPNNKTM) show a composition bias toward polar residues. Composition is skewed to low complexity over residues 57-91 (SQSQ…GNGN), 153-187 (ISQP…TTTP), 227-283 (QQQQ…SLQN), 416-445 (NNNN…GINN), 555-564 (GNTDGVNIDN), and 572-635 (NNNN…TNNT). Over residues 636 to 645 (ATPSVINGDS) the composition is skewed to polar residues. Composition is skewed to low complexity over residues 648–661 (QEQP…QPQQ) and 680–700 (LNKD…DDNN). A compositionally biased stretch (basic and acidic residues) spans 703–720 (SREEMENILKKSQQDSNK). The segment covering 729-751 (EDSNSGSPTFQDFQSSAAASNVS) has biased composition (polar residues). 2 stretches are compositionally biased toward low complexity: residues 780 to 810 (DSLN…HIQQ) and 849 to 880 (QQQF…NSGS). The span at 881-892 (INGGSNSGGGGV) shows a compositional bias: gly residues. Positions 981-994 (GGSTNRTTPPFLTP) are enriched in polar residues. The segment covering 995 to 1067 (NTSQTNLSSL…NKQTANNTTN (73 aa)) has biased composition (low complexity). Residues 1068–1087 (DFSFDQNTDLRSSTNSLTIG) are compositionally biased toward polar residues. A compositionally biased stretch (low complexity) spans 1088–1118 (SNSNFSSLKNSLNLENPENNNNPDKNVDNNN). 2 stretches are compositionally biased toward low complexity: residues 1225–1249 (DNNN…SLRN) and 1257–1291 (NISN…NNNE). A compositionally biased stretch (basic and acidic residues) spans 1362–1373 (RHKDSIGDKEMD).

This is an uncharacterized protein from Dictyostelium discoideum (Social amoeba).